A 244-amino-acid polypeptide reads, in one-letter code: Cyclin-Q (244 aa).

The protein belongs to the cyclin family. Cyclin-like FAM58 subfamily.

In terms of biological role, may be an activating cyclin for the cyclin-associated kinase CDK10. In Xenopus laevis (African clawed frog), this protein is Cyclin-Q (ccnq).